Reading from the N-terminus, the 439-residue chain is 23S rRNA (uracil(1939)-C(5))-methyltransferase RlmD (439 aa).

Residues 10–68 form the TRAM domain; it reads QKKLRAAFTTIVQDLDYQGLGVAKIQGKTWFIENALPQEQVQVQVIEEKRQYGLGRVQK. Positions 81, 87, 90, and 168 each coordinate [4Fe-4S] cluster. Positions 271, 300, 305, 321, 348, and 369 each coordinate S-adenosyl-L-methionine. The active-site Nucleophile is C395.

This sequence belongs to the class I-like SAM-binding methyltransferase superfamily. RNA M5U methyltransferase family. RlmD subfamily.

It catalyses the reaction uridine(1939) in 23S rRNA + S-adenosyl-L-methionine = 5-methyluridine(1939) in 23S rRNA + S-adenosyl-L-homocysteine + H(+). Catalyzes the formation of 5-methyl-uridine at position 1939 (m5U1939) in 23S rRNA. The sequence is that of 23S rRNA (uracil(1939)-C(5))-methyltransferase RlmD from Histophilus somni (strain 129Pt) (Haemophilus somnus).